We begin with the raw amino-acid sequence, 87 residues long: Retinal rod rhodopsin-sensitive cGMP 3',5'-cyclic phosphodiesterase subunit gamma (87 aa).

Met-1 is subject to N-acetylmethionine. Residues 1–12 (MNLEPPKGEIRS) show a composition bias toward basic and acidic residues. A disordered region spans residues 1-55 (MNLEPPKGEIRSATRVIGGPVTPRKGPPKFKQRQTRQFKSKPPKKGVQGFGDDIP). Basic residues predominate over residues 26–44 (GPPKFKQRQTRQFKSKPPK).

This sequence belongs to the rod/cone cGMP-PDE gamma subunit family. As to quaternary structure, oligomer composed of two catalytic chains (alpha and beta), an inhibitory chain (gamma) and the delta chain.

The enzyme catalyses 3',5'-cyclic GMP + H2O = GMP + H(+). In terms of biological role, participates in processes of transmission and amplification of the visual signal. cGMP-PDEs are the effector molecules in G-protein-mediated phototransduction in vertebrate rods and cones. This is Retinal rod rhodopsin-sensitive cGMP 3',5'-cyclic phosphodiesterase subunit gamma (Pde6g) from Mus musculus (Mouse).